The following is a 455-amino-acid chain: Tubulin alpha-1 chain (455 aa).

GTP-binding residues include Gln-11, Glu-75, Ser-144, Gly-148, Thr-149, Thr-183, Asn-210, and Asn-232. Glu-75 lines the Mg(2+) pocket. Glu-258 is a catalytic residue.

Belongs to the tubulin family. As to quaternary structure, dimer of alpha and beta chains. A typical microtubule is a hollow water-filled tube with an outer diameter of 25 nm and an inner diameter of 15 nM. Alpha-beta heterodimers associate head-to-tail to form protofilaments running lengthwise along the microtubule wall with the beta-tubulin subunit facing the microtubule plus end conferring a structural polarity. Microtubules usually have 13 protofilaments but different protofilament numbers can be found in some organisms and specialized cells. The cofactor is Mg(2+).

It localises to the cytoplasm. The protein resides in the cytoskeleton. The catalysed reaction is GTP + H2O = GDP + phosphate + H(+). Its function is as follows. Tubulin is the major constituent of microtubules, a cylinder consisting of laterally associated linear protofilaments composed of alpha- and beta-tubulin heterodimers. Microtubules grow by the addition of GTP-tubulin dimers to the microtubule end, where a stabilizing cap forms. Below the cap, tubulin dimers are in GDP-bound state, owing to GTPase activity of alpha-tubulin. This Schizosaccharomyces pombe (strain 972 / ATCC 24843) (Fission yeast) protein is Tubulin alpha-1 chain (nda2).